We begin with the raw amino-acid sequence, 341 residues long: L-threonine 3-dehydrogenase (341 aa).

Residue Cys-38 participates in Zn(2+) binding. Residues Thr-40 and His-43 each act as charge relay system in the active site. Residues His-63, Glu-64, Cys-93, Cys-96, Cys-99, and Cys-107 each coordinate Zn(2+). NAD(+) contacts are provided by residues Ile-175, Asp-195, Arg-200, 262 to 264 (LGI), and 286 to 287 (IY).

This sequence belongs to the zinc-containing alcohol dehydrogenase family. In terms of assembly, homotetramer. Requires Zn(2+) as cofactor.

Its subcellular location is the cytoplasm. It catalyses the reaction L-threonine + NAD(+) = (2S)-2-amino-3-oxobutanoate + NADH + H(+). Its pathway is amino-acid degradation; L-threonine degradation via oxydo-reductase pathway; glycine from L-threonine: step 1/2. Catalyzes the NAD(+)-dependent oxidation of L-threonine to 2-amino-3-ketobutyrate. The sequence is that of L-threonine 3-dehydrogenase from Shewanella pealeana (strain ATCC 700345 / ANG-SQ1).